The chain runs to 491 residues: Ubiquitin carboxyl-terminal hydrolase 30 (491 aa).

At 1 to 31 (MPWCKQGTTDKLVREFLRTGAAARNKMMKNW) the chain is on the mitochondrial intermembrane side. A helical transmembrane segment spans residues 32–52 (GVIGGIAAAMAAGVYVLWGPI). The Cytoplasmic segment spans residues 53–491 (SDRRKKRKGM…MQRPGLRVEE (439 aa)). One can recognise a USP domain in the interval 64–482 (PGLLNLGNTC…SAYLLFYERM (419 aa)). Residue cysteine 73 is the Nucleophile of the active site. The segment covering 346–355 (AQSQQKTSRT) has biased composition (polar residues). Residues 346–365 (AQSQQKTSRTNKAKASADPK) form a disordered region. The Proton acceptor role is filled by histidine 432.

Belongs to the peptidase C19 family.

The protein resides in the mitochondrion outer membrane. The enzyme catalyses Thiol-dependent hydrolysis of ester, thioester, amide, peptide and isopeptide bonds formed by the C-terminal Gly of ubiquitin (a 76-residue protein attached to proteins as an intracellular targeting signal).. In terms of biological role, deubiquitinating enzyme that acts as a key inhibitor of mitophagy by counteracting the action of parkin (PRKN). The protein is Ubiquitin carboxyl-terminal hydrolase 30 (usp30) of Danio rerio (Zebrafish).